The chain runs to 184 residues: MVSMLLVGRIGKSVGLNGGLRLHLESDFPECLKKGVKVSVAPLNAFSCVSSFKEYIIHSYEHAKNLLFLETIQTPEKAKELTNLGLFMSEAESKKLCVLKEGEFFYCDLVGLSVVEENEILGKVIEIQRISQTDYFLVETTLNLVEKGLAKIFLIPYRDFYIQEILLQDKKITTHNAKTLLENS.

The 80-residue stretch at 101 to 180 (EGEFFYCDLV…KITTHNAKTL (80 aa)) folds into the PRC barrel domain.

It belongs to the RimM family. As to quaternary structure, binds ribosomal protein uS19.

It is found in the cytoplasm. In terms of biological role, an accessory protein needed during the final step in the assembly of 30S ribosomal subunit, possibly for assembly of the head region. Essential for efficient processing of 16S rRNA. May be needed both before and after RbfA during the maturation of 16S rRNA. It has affinity for free ribosomal 30S subunits but not for 70S ribosomes. The polypeptide is Ribosome maturation factor RimM (Helicobacter pylori (strain ATCC 700392 / 26695) (Campylobacter pylori)).